The sequence spans 409 residues: bZIP transcription factor 16 (409 aa).

Residues 1–16 (MASNEMEKSSKEKEPK) are compositionally biased toward basic and acidic residues. 4 disordered regions span residues 1-63 (MASN…VASS), 118-236 (NGMT…LPVS), 274-327 (MHGK…LRKQ), and 362-409 (TTEN…KDST). Residues 24-34 (APPSSQEPSSA) are compositionally biased toward low complexity. The span at 133-145 (GDAKQSEVKEKLP) shows a compositional bias: basic and acidic residues. The span at 152–178 (SLGSLNMITGKNNEPGKNSGASANGAY) shows a compositional bias: polar residues. Residues 179–203 (SKSGESASDGSSEGSDGNSQNDSGS) are compositionally biased toward low complexity. Residues 216–228 (NGGSANGPQNGSA) show a composition bias toward polar residues. Residues 305-368 (ELKRQRRKQS…EELTTENTSL (64 aa)) form the bZIP domain. The Bipartite nuclear localization signal motif lies at 307-323 (KRQRRKQSNRESARRSR). Residues 307-326 (KRQRRKQSNRESARRSRLRK) are basic motif. Residues 314 to 327 (SNRESARRSRLRKQ) show a composition bias toward basic and acidic residues. Residues 333–368 (LAQRAEVLNEENTNLRAEINKLKSQCEELTTENTSL) are leucine-zipper. Residues 398–409 (AERKVDSYKDST) show a composition bias toward basic and acidic residues.

It belongs to the bZIP family. Monomer, homodimer and heterodimers with BZIP68 and GBF1/BZIP41. Heterodimers with GBF2/BZIP54 and GBF3/BZIP55. Binds DNA as monomer and forms homo- and heterodimers. The monomeric form is redox regulated. Interacts with GIP1.

Its subcellular location is the nucleus. In terms of biological role, transcriptional activator that binds to the G-box motif (5'-CACGTG-3') and other cis-acting elements with 5'-ACGT-3' core, such as Hex, C-box and as-1 motifs. Possesses high binding affinity to G-box, much lower affinity to Hex and C-box, and little affinity to as-1 element. G-box and G-box-like motifs are cis-acting elements defined in promoters of certain plant genes which are regulated by such diverse stimuli as light-induction or hormone control. Binds to the G-box motif 5'-CACGTG-3' of LHCB2.4 (At3g27690) promoter. May act as transcriptional repressor in light-regulated expression of LHCB2.4. Binds DNA as monomer. DNA-binding activity is redox-dependent. The sequence is that of bZIP transcription factor 16 from Arabidopsis thaliana (Mouse-ear cress).